The primary structure comprises 346 residues: Probable galacturonosyltransferase-like 6 (346 aa).

Residues 1 to 21 (MLWITRFAGLFSAAMAVIVLS) traverse the membrane as a helical; Signal-anchor for type II membrane protein segment. Over 22 to 346 (PSLQSFPPAA…TPYDLYRHSH (325 aa)) the chain is Lumenal. Residue Asn203 is glycosylated (N-linked (GlcNAc...) asparagine).

It belongs to the glycosyltransferase 8 family.

It is found in the golgi apparatus membrane. Its pathway is glycan metabolism; pectin biosynthesis. May be involved in pectin and/or xylans biosynthesis in cell walls. The sequence is that of Probable galacturonosyltransferase-like 6 (GATL6) from Arabidopsis thaliana (Mouse-ear cress).